The primary structure comprises 333 residues: Mitochondrial thiamine pyrophosphate carrier 1 (333 aa).

Solcar repeat units follow at residues 12–115 (GSRL…ITQF), 129–215 (PPSV…LRPR), and 222–318 (PYSS…ALKL). 6 consecutive transmembrane segments (helical) span residues 17–35 (VTAA…IAPL), 96–112 (LLYV…YRSI), 135–155 (FIAG…LDLL), 190–209 (GLGP…FCVY), 221–238 (LPYS…SVMA), and 293–310 (GLTV…VTMW).

It belongs to the mitochondrial carrier (TC 2.A.29) family.

It is found in the mitochondrion inner membrane. Mitochondrial transporter that mediates uptake of thiamine pyrophosphate (ThPP) into mitochondria. This Neurospora crassa (strain ATCC 24698 / 74-OR23-1A / CBS 708.71 / DSM 1257 / FGSC 987) protein is Mitochondrial thiamine pyrophosphate carrier 1 (tpc-1).